Reading from the N-terminus, the 121-residue chain is Large ribosomal subunit protein bL20 (121 aa).

It belongs to the bacterial ribosomal protein bL20 family.

Functionally, binds directly to 23S ribosomal RNA and is necessary for the in vitro assembly process of the 50S ribosomal subunit. It is not involved in the protein synthesizing functions of that subunit. In Roseobacter denitrificans (strain ATCC 33942 / OCh 114) (Erythrobacter sp. (strain OCh 114)), this protein is Large ribosomal subunit protein bL20.